A 174-amino-acid chain; its full sequence is MELVIGRVVKAHGITGEVVVEIRTDEPDRRFTPGASLRAKRSRDGGTGRNYVIEGVREHGARLLVRLAGVNDRDTADGLRGSLFVIDSADLPPIEEPDTYYDHQLEGLRVRTTAGQDVGVVAEVLHTGAGELLAVKCDSGEVLVPFVGAIVTSVSLDDRILEIDPPDGLLDLGS.

The region spanning 97–169 is the PRC barrel domain; it reads PDTYYDHQLE…ILEIDPPDGL (73 aa).

It belongs to the RimM family. In terms of assembly, binds ribosomal protein uS19.

The protein localises to the cytoplasm. Its function is as follows. An accessory protein needed during the final step in the assembly of 30S ribosomal subunit, possibly for assembly of the head region. Essential for efficient processing of 16S rRNA. May be needed both before and after RbfA during the maturation of 16S rRNA. It has affinity for free ribosomal 30S subunits but not for 70S ribosomes. This Mycobacterium ulcerans (strain Agy99) protein is Ribosome maturation factor RimM.